The chain runs to 413 residues: MDIEIIRKTDPEIADAIEKELIRQRNKIELIASENFVSRAVMEAMGSPLTNKYAEGYPNKRYYGGCEYVDIAEELARERLKKLFGAEHANVQPHSGAQANMAAYFALIKPGDTVLGMDLAHGGHLTHGSKVNFSGQIYNFVSYGVREDTGYIDYDEVERVAKKHKPKLIVAGASAYPRIIDFKRFREIADKVGAYLMVDMAHIAGLVAAGLHPNPVPYADVVTTTTHKTLRGPRGGAILCKEEYAKAIDKALFPGTQGGPLMHIIAAKAVCFKEALTDEFKEYQKRIVENAKALANALMERGINLVSGGTDNHLMLLDLRNTGITGKELETRLDEVNITCNKNAIPFDPLGPNVTSGVRLGTPAVTTRGMKPEDMVEIADIIVNVIRDENYKEKAKERVANLLKKYPLYEDLI.

(6S)-5,6,7,8-tetrahydrofolate contacts are provided by residues Leu119 and 123-125; that span reads GHL. At Lys228 the chain carries N6-(pyridoxal phosphate)lysine. Glu243 contacts (6S)-5,6,7,8-tetrahydrofolate.

It belongs to the SHMT family. Homodimer. The cofactor is pyridoxal 5'-phosphate.

It localises to the cytoplasm. The catalysed reaction is (6R)-5,10-methylene-5,6,7,8-tetrahydrofolate + glycine + H2O = (6S)-5,6,7,8-tetrahydrofolate + L-serine. The protein operates within one-carbon metabolism; tetrahydrofolate interconversion. It participates in amino-acid biosynthesis; glycine biosynthesis; glycine from L-serine: step 1/1. In terms of biological role, catalyzes the reversible interconversion of serine and glycine with tetrahydrofolate (THF) serving as the one-carbon carrier. This reaction serves as the major source of one-carbon groups required for the biosynthesis of purines, thymidylate, methionine, and other important biomolecules. Also exhibits THF-independent aldolase activity toward beta-hydroxyamino acids, producing glycine and aldehydes, via a retro-aldol mechanism. This is Serine hydroxymethyltransferase from Thermoanaerobacter pseudethanolicus (strain ATCC 33223 / 39E) (Clostridium thermohydrosulfuricum).